The sequence spans 264 residues: SPRY domain-containing SOCS box protein 2 (264 aa).

The segment covering 1–18 has biased composition (polar residues); the sequence is MGQTALARGSSSTPSSHA. The tract at residues 1-53 is disordered; it reads MGQTALARGSSSTPSSHALYSDLSPPEGLEELLSAPPPDLGAQRHHGWNPKDC. Over residues 21–34 the composition is skewed to low complexity; it reads SDLSPPEGLEELLS. In terms of domain architecture, B30.2/SPRY spans 26–221; sequence PEGLEELLSA…VRIRYLGERR (196 aa). Residues 222–264 enclose the SOCS box domain; sequence AEEPQSLLHLSRLCVRHALGDTRLGQISSLPLPPAMKRYLLYK.

The protein belongs to the SPSB family. In terms of assembly, component of the probable ECS(SPSB2) E3 ubiquitin-protein ligase complex which contains CUL5, RNF7/RBX2, Elongin BC complex and SPSB2. Interacts with CUL5, RNF7, ELOB and ELOC. Interacts with MET. Interacts (via B30.2/SPRY domain) with PAWR; this interaction occurs in association with the Elongin BC complex. Interacts with NOS2.

The protein resides in the cytoplasm. It is found in the cytosol. It functions in the pathway protein modification; protein ubiquitination. Its function is as follows. Substrate recognition component of a SCF-like ECS (Elongin BC-CUL2/5-SOCS-box protein) E3 ubiquitin-protein ligase complex which mediates the ubiquitination and subsequent proteasomal degradation of target proteins. Negatively regulates nitric oxide (NO) production and limits cellular toxicity in activated macrophages by mediating the ubiquitination and proteasomal degradation of NOS2. Acts as a bridge which links NOS2 with the ECS E3 ubiquitin ligase complex components ELOC and CUL5. This is SPRY domain-containing SOCS box protein 2 (Spsb2) from Rattus norvegicus (Rat).